A 198-amino-acid chain; its full sequence is Molybdenum cofactor guanylyltransferase (198 aa).

Residues 14–16 (LAG), K27, D73, and D103 each bind GTP. Position 103 (D103) interacts with Mg(2+).

This sequence belongs to the MobA family. As to quaternary structure, monomer. The cofactor is Mg(2+).

It is found in the cytoplasm. It catalyses the reaction Mo-molybdopterin + GTP + H(+) = Mo-molybdopterin guanine dinucleotide + diphosphate. Transfers a GMP moiety from GTP to Mo-molybdopterin (Mo-MPT) cofactor (Moco or molybdenum cofactor) to form Mo-molybdopterin guanine dinucleotide (Mo-MGD) cofactor. The polypeptide is Molybdenum cofactor guanylyltransferase (Pseudomonas aeruginosa (strain ATCC 15692 / DSM 22644 / CIP 104116 / JCM 14847 / LMG 12228 / 1C / PRS 101 / PAO1)).